Here is a 240-residue protein sequence, read N- to C-terminus: Bidirectional sugar transporter SWEET5 (240 aa).

Over 1–9 the chain is Extracellular; it reads MTDPHTART. Residues 10 to 30 traverse the membrane as a helical segment; that stretch reads IVGIVGNVISFGLFCAPIPTM. Residues 10–95 form the MtN3/slv 1 domain; it reads IVGIVGNVIS…YVTIFFVFAT (86 aa). Residues 31–45 are Cytoplasmic-facing; sequence VKIWKMKSVSEFKPD. A helical transmembrane segment spans residues 46–66; the sequence is PYVATVLNCMMWTFYGLPFVQ. At 67 to 72 the chain is on the extracellular side; that stretch reads PDSLLV. Residues 73-93 form a helical membrane-spanning segment; it reads ITINGTGLFMELVYVTIFFVF. Residues 94–103 are Cytoplasmic-facing; it reads ATSPVRRKIT. A helical membrane pass occupies residues 104–124; sequence IAMVIEVIFMAVVIFCTMYFL. At 125–131 the chain is on the extracellular side; sequence HTTKQRS. The chain crosses the membrane as a helical span at residues 132–152; that stretch reads MLIGILCIVFNVIMYAAPLTV. Residues 133-217 form the MtN3/slv 2 domain; it reads LIGILCIVFN…IIYITYYKTT (85 aa). Topologically, residues 153–165 are cytoplasmic; sequence MKLVIKTKSVKYM. Residues 166–186 traverse the membrane as a helical segment; the sequence is PFFLSLANFMNGVVWVIYACL. At 187–190 the chain is on the extracellular side; it reads KFDP. The chain crosses the membrane as a helical span at residues 191 to 211; sequence YILIPNGLGSLSGIIQLIIYI. The Cytoplasmic segment spans residues 212–240; it reads TYYKTTNWNDDDEDKEKRYSNAGIELGQA.

This sequence belongs to the SWEET sugar transporter family. In terms of assembly, forms homooligomers and heterooligomers with SWEET6, SWEET8, SWEET9, SWEET11 and SWEET12.

The protein resides in the cell membrane. Its function is as follows. Mediates both low-affinity uptake and efflux of sugar across the plasma membrane. May play roles in nurturing the male gametophyte. This Arabidopsis thaliana (Mouse-ear cress) protein is Bidirectional sugar transporter SWEET5.